A 273-amino-acid polypeptide reads, in one-letter code: Aquaporin NIP1-4 (273 aa).

The next 2 membrane-spanning stretches (helical) occupy residues 59 to 79 and 86 to 106; these read LLAE…AITV and VTFP…VYAV. Positions 115–117 match the NPA 1 motif; the sequence is NPA. Helical transmembrane passes span 133 to 155, 174 to 194, and 198 to 218; these read APAY…RLMF, SLVI…AVAT, and AVGH…VLFA. The short motif at 227–229 is the NPA 2 element; that stretch reads NPA. Residues 245–265 form a helical membrane-spanning segment; sequence WVYILGPFAGAAAGAWAYSLI.

Belongs to the MIP/aquaporin (TC 1.A.8) family. NIP (TC 1.A.8.12) subfamily. As to expression, expressed in leaves.

It is found in the membrane. Functionally, aquaporins facilitate the transport of water and small neutral solutes across cell membranes. This Oryza sativa subsp. japonica (Rice) protein is Aquaporin NIP1-4 (NIP1-4).